The chain runs to 204 residues: uncharacterized protein (204 aa).

The Tele-phosphohistidine intermediate role is filled by His9. The active-site Proton donor/acceptor is Glu86.

This sequence belongs to the phosphoglycerate mutase family.

This is an uncharacterized protein from Acanthamoeba polyphaga (Amoeba).